Reading from the N-terminus, the 293-residue chain is Acetylglutamate kinase (293 aa).

Substrate is bound by residues 68 to 69 (GG), Arg-90, and Asn-189.

Belongs to the acetylglutamate kinase family. ArgB subfamily.

It localises to the cytoplasm. It catalyses the reaction N-acetyl-L-glutamate + ATP = N-acetyl-L-glutamyl 5-phosphate + ADP. Its pathway is amino-acid biosynthesis; L-arginine biosynthesis; N(2)-acetyl-L-ornithine from L-glutamate: step 2/4. Catalyzes the ATP-dependent phosphorylation of N-acetyl-L-glutamate. This chain is Acetylglutamate kinase, found in Mycolicibacterium smegmatis (strain ATCC 700084 / mc(2)155) (Mycobacterium smegmatis).